We begin with the raw amino-acid sequence, 468 residues long: UDP-N-acetylmuramate--L-alanine ligase (468 aa).

107-113 is a binding site for ATP; the sequence is GTHGKTT.

Belongs to the MurCDEF family.

It is found in the cytoplasm. It catalyses the reaction UDP-N-acetyl-alpha-D-muramate + L-alanine + ATP = UDP-N-acetyl-alpha-D-muramoyl-L-alanine + ADP + phosphate + H(+). The protein operates within cell wall biogenesis; peptidoglycan biosynthesis. Functionally, cell wall formation. This is UDP-N-acetylmuramate--L-alanine ligase from Roseiflexus sp. (strain RS-1).